The sequence spans 246 residues: 1-(5-phosphoribosyl)-5-[(5-phosphoribosylamino)methylideneamino] imidazole-4-carboxamide isomerase (246 aa).

Catalysis depends on aspartate 10, which acts as the Proton acceptor. Aspartate 135 serves as the catalytic Proton donor.

It belongs to the HisA/HisF family.

It is found in the cytoplasm. It catalyses the reaction 1-(5-phospho-beta-D-ribosyl)-5-[(5-phospho-beta-D-ribosylamino)methylideneamino]imidazole-4-carboxamide = 5-[(5-phospho-1-deoxy-D-ribulos-1-ylimino)methylamino]-1-(5-phospho-beta-D-ribosyl)imidazole-4-carboxamide. Its pathway is amino-acid biosynthesis; L-histidine biosynthesis; L-histidine from 5-phospho-alpha-D-ribose 1-diphosphate: step 4/9. This Methanococcoides burtonii (strain DSM 6242 / NBRC 107633 / OCM 468 / ACE-M) protein is 1-(5-phosphoribosyl)-5-[(5-phosphoribosylamino)methylideneamino] imidazole-4-carboxamide isomerase.